Reading from the N-terminus, the 2923-residue chain is Cadherin EGF LAG seven-pass G-type receptor 2 (2923 aa).

Positions 1-31 are cleaved as a signal peptide; that stretch reads MRSPATGVPLPTPPPPLLLLLLLLLPPPLLG. Residues 32-2380 lie on the Extracellular side of the membrane; it reads DQVGPCRSLG…GEILPLKTLT (2349 aa). Positions 154–198 are disordered; that stretch reads PGLRAGERSPEESLGGRRKRNVNTAPQFQPPSYQATVPENQPAGT. The span at 158 to 168 shows a compositional bias: basic and acidic residues; it reads AGERSPEESLG. A compositionally biased stretch (polar residues) spans 175 to 196; sequence VNTAPQFQPPSYQATVPENQPA. Cadherin domains lie at 182-289, 290-399, 400-505, 506-610, 611-712, 713-815, 816-921, 922-1023, and 1028-1146; these read QPPS…DPVF, EQQE…APQF, SEKR…APIF, VSTP…NPTF, TQPE…RPVF, QSSH…APQF, LRDS…PPVF, EQDE…PPVL, and ILFN…SPLL. N-linked (GlcNAc...) asparagine glycosylation is found at asparagine 486, asparagine 557, and asparagine 701. 4 N-linked (GlcNAc...) asparagine glycosylation sites follow: asparagine 1036, asparagine 1076, asparagine 1182, and asparagine 1212. The EGF-like 1; calcium-binding domain occupies 1228 to 1286; the sequence is DDNICLREPCENYMRCVSVLRFDSSAPFIASSSVLFRPIHPVGGLRCRCPPGFTGDYCE. 9 disulfides stabilise this stretch: cysteine 1232-cysteine 1243, cysteine 1237-cysteine 1274, cysteine 1276-cysteine 1285, cysteine 1292-cysteine 1303, cysteine 1297-cysteine 1312, cysteine 1314-cysteine 1323, cysteine 1332-cysteine 1343, cysteine 1337-cysteine 1353, and cysteine 1355-cysteine 1365. In terms of domain architecture, EGF-like 2; calcium-binding spans 1288 to 1324; the sequence is EVDLCYSRPCGPHGRCRSREGGYTCLCRDGYTGEHCE. One can recognise an EGF-like 3; calcium-binding domain in the interval 1328 to 1366; the sequence is RSGRCTPGVCKNGGTCVNLLVGGFKCDCPSGDFEKPYCQ. The region spanning 1367–1571 is the Laminin G-like 1 domain; that stretch reads VTTRSFPAHS…IANNGTVPGC (205 aa). Residues asparagine 1501 and asparagine 1565 are each glycosylated (N-linked (GlcNAc...) asparagine). 4 disulfides stabilise this stretch: cysteine 1545-cysteine 1571, cysteine 1578-cysteine 1589, cysteine 1583-cysteine 1598, and cysteine 1600-cysteine 1609. In terms of domain architecture, EGF-like 4; calcium-binding spans 1574–1610; that stretch reads KKNVCDSNTCHNGGTCVNQWDAFSCECPLGFGGKSCA. At asparagine 1591 the chain carries (3R)-3-hydroxyasparagine. In terms of domain architecture, Laminin G-like 2 spans 1614–1791; the sequence is ANPQHFLGSS…GESINVEQGC (178 aa). N-linked (GlcNAc...) asparagine glycosylation occurs at asparagine 1741. Cystine bridges form between cysteine 1761/cysteine 1791, cysteine 1797/cysteine 1808, cysteine 1802/cysteine 1817, cysteine 1819/cysteine 1828, cysteine 1832/cysteine 1843, cysteine 1837/cysteine 1855, cysteine 1857/cysteine 1866, cysteine 1887/cysteine 1899, cysteine 1889/cysteine 1906, cysteine 1908/cysteine 1921, cysteine 1924/cysteine 1936, cysteine 1926/cysteine 1943, cysteine 1945/cysteine 1954, and cysteine 1957/cysteine 1969. Residues 1793–1828 enclose the EGF-like 5; calcium-binding domain; that stretch reads LPDPCDSNPCPANSYCSNDWDSYSCSCDPGYYGDNC. Asparagine 1810 is modified ((3R)-3-hydroxyasparagine). Asparagine 1827 is a glycosylation site (N-linked (GlcNAc...) asparagine). The region spanning 1829–1867 is the EGF-like 6; calcium-binding domain; it reads TNVCDLNPCEHQSVCTRKPSAPHGYTCECPPNYLGPYCE. An EGF-like 7; calcium-binding domain is found at 1883–1922; that stretch reads TCGPCNCDVSKGFDPDCNKTSGECHCKENHYRPPGSPTCL. Asparagine 1900 carries an N-linked (GlcNAc...) asparagine glycan. Residues 1924–1971 enclose the Laminin EGF-like domain; that stretch reads CDCYPTGSLSRVCDPEDGQCPCKPGVIGRQCDRCDNPFAEVTTNGCEV. Asparagine 2024, asparagine 2043, and asparagine 2061 each carry an N-linked (GlcNAc...) asparagine glycan. In terms of domain architecture, GAIN-B spans 2199–2369; sequence ETTVILPESV…AVLMDVSRRE (171 aa). Residues 2213–2238 are disordered; sequence PPVVRPAGPGEAQEPEELARRQRRHP. Cystine bridges form between cysteine 2319–cysteine 2351 and cysteine 2339–cysteine 2353. The segment at 2319-2369 is GPS; the sequence is CVFWNHSILVSGTGGWSARGCEVVFRNESHVSCQCNHMTSFAVLMDVSRRE. N-linked (GlcNAc...) asparagine glycans are attached at residues asparagine 2323 and asparagine 2345. A helical transmembrane segment spans residues 2381 to 2401; sequence YVALGVTLAALLLTFFFLTLL. Residues 2402–2416 lie on the Cytoplasmic side of the membrane; sequence RILRSNQHGIRRNLT. The helical transmembrane segment at 2417 to 2437 threads the bilayer; sequence AALGLAQLVFLLGINQADLPF. Position 2438 (alanine 2438) is a topological domain, extracellular. The chain crosses the membrane as a helical span at residues 2439-2459; sequence CTVIAILLHFLYLCTFSWALL. Topologically, residues 2460–2480 are cytoplasmic; the sequence is EALHLYRALTEVRDVNTGPMR. Residues 2481 to 2501 traverse the membrane as a helical segment; it reads FYYMLGWGVPAFITGLAVGLD. At 2502 to 2519 the chain is on the extracellular side; the sequence is PEGYGNPDFCWLSIYDTL. Residues 2520 to 2540 form a helical membrane-spanning segment; that stretch reads IWSFAGPVAFAVSMSVFLYIL. The Cytoplasmic segment spans residues 2541–2560; it reads AARASCAAQRQGFEKKGPVS. A helical transmembrane segment spans residues 2561–2581; it reads GLQPSFAVLLLLSATWLLALL. The Extracellular segment spans residues 2582 to 2591; sequence SVNSDTLLFH. Residues 2592-2612 traverse the membrane as a helical segment; the sequence is YLFATCNCIQGPFIFLSYVVL. Topologically, residues 2613-2923 are cytoplasmic; that stretch reads SKEVRKALKL…SEFLFFNFLH (311 aa). 2 disordered regions span residues 2688–2838 and 2854–2888; these read SALN…HKGI and LRLP…RQSL. Composition is skewed to acidic residues over residues 2718-2730 and 2742-2753; these read TDSD…EDDQ and SEEEEEEEEEEA. Positions 2807-2819 are enriched in basic and acidic residues; it reads PEERLRENGDALS. Residues 2863-2873 show a composition bias toward low complexity; that stretch reads GSSRGSSASEG.

This sequence belongs to the G-protein coupled receptor 2 family. LN-TM7 subfamily. Heterodimer of 2 chains generated by proteolytic processing; the large extracellular N-terminal fragment and the membrane-bound C-terminal fragment predominantly remain associated and non-covalently linked. In terms of processing, the iron and 2-oxoglutarate dependent 3-hydroxylation of aspartate and asparagine is (R) stereospecific within EGF domains. Autoproteolytically processed at the GPS region of the GAIN-B domain; this cleavage modulates receptor activity. Highest expression in brain and testis.

It localises to the cell membrane. Receptor that may have an important role in cell/cell signaling during nervous system formation. The polypeptide is Cadherin EGF LAG seven-pass G-type receptor 2 (Homo sapiens (Human)).